The sequence spans 66 residues: uncharacterized protein (66 aa).

Residues Trp-32–Arg-49 form a helical membrane-spanning segment.

It is found in the membrane. This is an uncharacterized protein from Bacillus subtilis (strain 168).